The chain runs to 357 residues: Retinoic acid-induced protein 3 (357 aa).

The Extracellular segment spans residues 1–33 (MATTVPDGCRNGLKSKYYRLCDKAEAWGIVLET). The chain crosses the membrane as a helical span at residues 34–54 (VATAGVVTSVAFMLTLPILVC). Residues 55 to 68 (KVQDSNRRKMLPTQ) lie on the Cytoplasmic side of the membrane. A helical transmembrane segment spans residues 69-89 (FLFLLGVLGIFGLTFAFIIGL). Topologically, residues 90–97 (DGSTGPTR) are extracellular. The chain crosses the membrane as a helical span at residues 98–118 (FFLFGILFSICFSCLLAHAVS). The Cytoplasmic portion of the chain corresponds to 119-129 (LTKLVRGRKPL). The chain crosses the membrane as a helical span at residues 130–150 (SLLVILGLAVGFSLVQDVIAI). Residues 151-176 (EYIVLTMNRTNVNVFSELSAPRRNED) lie on the Extracellular side of the membrane. A glycan (N-linked (GlcNAc...) asparagine) is linked at asparagine 158. The helical transmembrane segment at 177-197 (FVLLLTYVLFLMALTFLMSSF) threads the bilayer. Topologically, residues 198 to 212 (TFCGSFTGWKRHGAH) are cytoplasmic. A helical membrane pass occupies residues 213–233 (IYLTMLLSIAIWVAWITLLML). Over 234 to 247 (PDFDRRWDDTILSS) the chain is Extracellular. Residues 248–268 (ALAANGWVFLLAYVSPEFWLL) traverse the membrane as a helical segment. Residues 269 to 357 (TKQRNPMDYP…KDYEVKKEGS (89 aa)) are Cytoplasmic-facing. Position 301 is a phosphoserine (serine 301). Tyrosine 317 and tyrosine 320 each carry phosphotyrosine. Serine 345 is subject to Phosphoserine. 2 positions are modified to phosphotyrosine: tyrosine 347 and tyrosine 350.

Belongs to the G-protein coupled receptor 3 family. As to quaternary structure, interacts (via its transmembrane domain) with EGFR. Post-translationally, phosphorylated in two conserved double-tyrosine motifs, Tyr-317/Tyr-320 and Tyr-347/Tyr-350, by EGFR; leading to inactivation of the tumor suppressive function of GPRC5A in lung cancer cells. Tyr-317 and Tyr-320 are the preferred residues responsible for EGFR-mediated GPRC5A phosphorylation. Expressed at high level in fetal and adult lung tissues but repressed in most human lung cancers. Constitutively expressed in fetal kidney and adult placenta, kidney, prostate, testis, ovary, small intestine, colon, stomach, and spinal cord at low to moderate levels. Not detectable in fetal heart, brain, and liver and adult heart, brain, liver, skeletal muscle, pancreas, spleen, thymus, and peripheral leukocytes. According to PubMed:10783259, expressed at low but detectable level in pancreas and heart.

The protein resides in the cell membrane. It localises to the cytoplasmic vesicle membrane. In terms of biological role, orphan receptor. Could be involved in modulating differentiation and maintaining homeostasis of epithelial cells. This retinoic acid-inducible GPCR provide evidence for a possible interaction between retinoid and G-protein signaling pathways. Functions as a negative modulator of EGFR signaling. May act as a lung tumor suppressor. The protein is Retinoic acid-induced protein 3 (GPRC5A) of Homo sapiens (Human).